Here is a 337-residue protein sequence, read N- to C-terminus: Formamidase (337 aa).

One can recognise a CN hydrolase domain in the interval 14-257 (VVIGLVQLQL…DEIITAEVRP (244 aa)). Residue glutamate 60 is the Proton acceptor of the active site. Lysine 129 serves as the catalytic Proton donor. Cysteine 162 functions as the Nucleophile in the catalytic mechanism.

It belongs to the carbon-nitrogen hydrolase superfamily. Aliphatic amidase family.

It catalyses the reaction formamide + H2O = formate + NH4(+). In terms of biological role, is an aliphatic amidase with a restricted substrate specificity, as it only hydrolyzes formamide. In Bradyrhizobium diazoefficiens (strain JCM 10833 / BCRC 13528 / IAM 13628 / NBRC 14792 / USDA 110), this protein is Formamidase.